Consider the following 120-residue polypeptide: Large ribosomal subunit protein eL8 (120 aa).

Belongs to the eukaryotic ribosomal protein eL8 family. As to quaternary structure, part of the 50S ribosomal subunit. Probably part of the RNase P complex.

It localises to the cytoplasm. In terms of biological role, multifunctional RNA-binding protein that recognizes the K-turn motif in ribosomal RNA, the RNA component of RNase P, box H/ACA, box C/D and box C'/D' sRNAs. The protein is Large ribosomal subunit protein eL8 of Halobacterium salinarum (strain ATCC 29341 / DSM 671 / R1).